The sequence spans 42 residues: Delta-hexatoxin-Hv1b (42 aa).

4 disulfides stabilise this stretch: cysteine 1–cysteine 15, cysteine 8–cysteine 20, cysteine 14–cysteine 31, and cysteine 16–cysteine 42.

This sequence belongs to the neurotoxin 06 (delta-actx) family. Expressed by the venom gland.

It localises to the secreted. Lethal neurotoxin. Slows the inactivation of tetrodotoxin-sensitive voltage-gated sodium channels (Nav) by binding to site 3 of the channel, resulting in repetitive firing in autonomic and motor nerve fibers. This Hadronyche versuta (Blue mountains funnel-web spider) protein is Delta-hexatoxin-Hv1b.